The sequence spans 291 residues: Protein pxr1 (291 aa).

The segment covering Met-1–Lys-11 has biased composition (basic residues). 2 disordered regions span residues Met-1–Asp-26 and Leu-146–Arg-268. Polar residues-rich tracts occupy residues Asp-15–Thr-25 and Leu-146–Ala-156. The 55-residue stretch at Thr-25–Lys-79 folds into the G-patch domain. The segment covering Glu-194–Arg-205 has biased composition (basic and acidic residues). The span at Lys-206–Lys-219 shows a compositional bias: basic residues. A compositionally biased stretch (basic and acidic residues) spans Met-230–Glu-247.

Belongs to the PINX1 family.

It localises to the nucleus. The protein localises to the nucleolus. Its function is as follows. Involved in rRNA-processing at A0, A1 and A2 sites and negatively regulates telomerase. The protein is Protein pxr1 (pxr1) of Aspergillus clavatus (strain ATCC 1007 / CBS 513.65 / DSM 816 / NCTC 3887 / NRRL 1 / QM 1276 / 107).